The chain runs to 352 residues: RAD51-associated protein 1 (352 aa).

The span at 1-10 (MVRPVRHKKP) shows a compositional bias: basic residues. Disordered regions lie at residues 1-78 (MVRP…TFSI) and 115-144 (TNVQ…HISN). Phosphoserine occurs at positions 19 and 21. Residues 30–49 (VPLNKKSRTAPKELKQDKPK) form an interaction with DNA region. Positions 39 to 72 (APKELKQDKPKPNLNNLRKEEIPVQEKTPKKRLP) are enriched in basic and acidic residues. A Phosphothreonine modification is found at threonine 66. Phosphoserine is present on residues serine 120 and serine 124. Residues 132-144 (KIETMNKSPHISN) are compositionally biased toward polar residues. The SIM motif signature appears at 154–159 (LDKITV). Residues 162 to 323 (DVGGVQGKRK…RSSSSPLVVV (162 aa)) are disordered. The span at 188 to 221 (SDGDSANDTEPDFAPGEDSEDDSDFCESEDNDED) shows a compositional bias: acidic residues. Residues 229–247 (VKEIKKKEVKVKSPVEKKE) are compositionally biased toward basic and acidic residues. The interval 243 to 304 (VEKKEKKSKS…PSAESKKPKW (62 aa)) is interaction with DNA. Lysine 251 participates in a covalent cross-link: Glycyl lysine isopeptide (Lys-Gly) (interchain with G-Cter in ubiquitin; alternate). Lysine 269 is covalently cross-linked (Glycyl lysine isopeptide (Lys-Gly) (interchain with G-Cter in SUMO)). Over residues 270-284 (SESQSLPKKVSLSSD) the composition is skewed to polar residues. Serine 280 is modified (phosphoserine). The WVPP motif motif lies at 304–307 (WVPP). Low complexity predominate over residues 306 to 323 (PPAASGGSRSSSSPLVVV). An interaction with RAD51 region spans residues 313–352 (SRSSSSPLVVVSVKSPNQSLRLGLSRLARVKPLHPNATST). Position 327 is a phosphoserine (serine 327).

Monomer; elongated monodisperse monomer. Interacts (via C-terminal region) with RAD51; the interaction is direct. Interacts (via SIM motif) with WDR48/UAF1; WDR48/UAF1 and RAD51AP1 cooperate together to stimulate RAD51-mediated homologous recombination (HR). Interacts (via WVPP motif) with DMC1; the interaction is direct. Interacts with PALB2. Interacts with RAD52. In terms of assembly, does not interact with DMC1; lack of interaction is caused by the absence of the WVPP motif in this isoform. Sumoylation with SUMO2/3 by NSMCE2/MMS21 promotes stabilization, possibly by preventing ubiquitination. Sumoylation is required for alternative lengthening of telomeres (ALT) pathway. Highly expressed in testis and thymus. Lower levels in colon and small intestine. Little or no expression in spleen, prostate, ovary and peripheral blood leukocytes.

It localises to the chromosome. Its subcellular location is the nucleus. The protein localises to the telomere. In terms of biological role, structure-specific DNA-binding protein involved in DNA repair by promoting RAD51-mediated homologous recombination. Acts by stimulating D-Loop formation by RAD51: specifically enhances joint molecule formation through its structure-specific DNA interaction and its interaction with RAD51. Binds single-stranded DNA (ssDNA), double-stranded DNA (dsDNA) and secondary DNA structures, such as D-loop structures: has a strong preference for branched-DNA structures that are obligatory intermediates during joint molecule formation. Cooperates with WDR48/UAF1 to stimulate RAD51-mediated homologous recombination: both WDR48/UAF1 and RAD51AP1 have coordinated role in DNA-binding during homologous recombination and DNA repair. WDR48/UAF1 and RAD51AP1 also have a coordinated role in DNA-binding to promote USP1-mediated deubiquitination of FANCD2. Also involved in meiosis by promoting DMC1-mediated homologous meiotic recombination. Key mediator of alternative lengthening of telomeres (ALT) pathway, a homology-directed repair mechanism of telomere elongation that controls proliferation in aggressive cancers, by stimulating homologous recombination. May also bind RNA; additional evidences are however required to confirm RNA-binding in vivo. This is RAD51-associated protein 1 from Homo sapiens (Human).